Here is a 273-residue protein sequence, read N- to C-terminus: Phosphate import ATP-binding protein PstB (273 aa).

The ABC transporter domain occupies 18 to 257 (ISLQNVTISY…EFDKTKKIFN (240 aa)). Residue 50–57 (GPSGCGKS) participates in ATP binding.

Belongs to the ABC transporter superfamily. Phosphate importer (TC 3.A.1.7) family. As to quaternary structure, the complex is composed of two ATP-binding proteins (PstB), two transmembrane proteins (PstC and PstA) and a solute-binding protein (PstS).

The protein resides in the cell inner membrane. The enzyme catalyses phosphate(out) + ATP + H2O = ADP + 2 phosphate(in) + H(+). Its function is as follows. Part of the ABC transporter complex PstSACB involved in phosphate import. Responsible for energy coupling to the transport system. In Prochlorococcus marinus (strain SARG / CCMP1375 / SS120), this protein is Phosphate import ATP-binding protein PstB.